Here is a 240-residue protein sequence, read N- to C-terminus: 1-(5-phosphoribosyl)-5-[(5-phosphoribosylamino)methylideneamino] imidazole-4-carboxamide isomerase (240 aa).

The active-site Proton acceptor is the Asp8. Residue Asp129 is the Proton donor of the active site.

The protein belongs to the HisA/HisF family.

It localises to the cytoplasm. The enzyme catalyses 1-(5-phospho-beta-D-ribosyl)-5-[(5-phospho-beta-D-ribosylamino)methylideneamino]imidazole-4-carboxamide = 5-[(5-phospho-1-deoxy-D-ribulos-1-ylimino)methylamino]-1-(5-phospho-beta-D-ribosyl)imidazole-4-carboxamide. It functions in the pathway amino-acid biosynthesis; L-histidine biosynthesis; L-histidine from 5-phospho-alpha-D-ribose 1-diphosphate: step 4/9. This chain is 1-(5-phosphoribosyl)-5-[(5-phosphoribosylamino)methylideneamino] imidazole-4-carboxamide isomerase, found in Dinoroseobacter shibae (strain DSM 16493 / NCIMB 14021 / DFL 12).